Reading from the N-terminus, the 320-residue chain is Cytochrome f (320 aa).

The first 35 residues, 1–35, serve as a signal peptide directing secretion; the sequence is MQTRNTFSWIREEITRSISVSLIIYIITWASISSA. Heme-binding residues include Tyr-36, Cys-56, Cys-59, and His-60. The chain crosses the membrane as a helical span at residues 286–305; the sequence is VQGLLFFLGSVVLAQIFLVL.

Belongs to the cytochrome f family. As to quaternary structure, the 4 large subunits of the cytochrome b6-f complex are cytochrome b6, subunit IV (17 kDa polypeptide, petD), cytochrome f and the Rieske protein, while the 4 small subunits are PetG, PetL, PetM and PetN. The complex functions as a dimer. Heme serves as cofactor.

Its subcellular location is the plastid. The protein localises to the chloroplast thylakoid membrane. Functionally, component of the cytochrome b6-f complex, which mediates electron transfer between photosystem II (PSII) and photosystem I (PSI), cyclic electron flow around PSI, and state transitions. This Arabidopsis thaliana (Mouse-ear cress) protein is Cytochrome f (petA).